The sequence spans 168 residues: Ribosome maturation factor RimM (168 aa).

Residues 97-168 (PNEYYYYELL…RLVVKVPEWI (72 aa)) form the PRC barrel domain.

The protein belongs to the RimM family. As to quaternary structure, binds ribosomal protein uS19.

It is found in the cytoplasm. In terms of biological role, an accessory protein needed during the final step in the assembly of 30S ribosomal subunit, possibly for assembly of the head region. Essential for efficient processing of 16S rRNA. May be needed both before and after RbfA during the maturation of 16S rRNA. It has affinity for free ribosomal 30S subunits but not for 70S ribosomes. This Pseudothermotoga lettingae (strain ATCC BAA-301 / DSM 14385 / NBRC 107922 / TMO) (Thermotoga lettingae) protein is Ribosome maturation factor RimM.